Consider the following 112-residue polypeptide: UPF0102 protein NIS_1551 (112 aa).

The protein belongs to the UPF0102 family.

The sequence is that of UPF0102 protein NIS_1551 from Nitratiruptor sp. (strain SB155-2).